Reading from the N-terminus, the 592-residue chain is Methionine--tRNA ligase (592 aa).

The 'HIGH' region motif lies at 12–22 (PYANGPFHVGH). Zn(2+)-binding residues include C144, C147, C157, and C160. The 'KMSKS' region motif lies at 342–346 (KMSTS). T345 contacts ATP.

This sequence belongs to the class-I aminoacyl-tRNA synthetase family. MetG type 1 subfamily. In terms of assembly, monomer. The cofactor is Zn(2+).

The protein resides in the cytoplasm. It catalyses the reaction tRNA(Met) + L-methionine + ATP = L-methionyl-tRNA(Met) + AMP + diphosphate. Functionally, is required not only for elongation of protein synthesis but also for the initiation of all mRNA translation through initiator tRNA(fMet) aminoacylation. The chain is Methionine--tRNA ligase from Roseiflexus castenholzii (strain DSM 13941 / HLO8).